The primary structure comprises 53 residues: Alpha-1-antiproteinase 1 (53 aa).

Residues 1–28 (EDLQGDAVPETSATKDDNEXPEMIPMSL) form a disordered region.

This sequence belongs to the serpin family. Post-translationally, N-glycosylated; contains biantennary glycans. In terms of tissue distribution, plasma.

Its subcellular location is the secreted. This is Alpha-1-antiproteinase 1 from Equus caballus (Horse).